The following is a 414-amino-acid chain: MGGSGNWIKSLITNKKNITDDQEKNIKKKWKLWRTSSEGLISSSKGFKSRGGSYGTPSLGSDPPSFSADDSFTAAVAAVIRAPPKDFFLVKREWAATRIQAAFRAFLARQALRALKAVVRIQAIFRGRQVRKQADVTLRCMQALVRVQARVRAHCNRGPSDGQELEKPSDQQKDDPAKQAEKGWCDSPGSINEVRTKLQMRQEGAIKRERAMVYALTHQPRTCPSPAKASKQGSVKKNNGSCKSSPGWNWLDRWVADRPWEGRLMEGPTNSSENARKSESSVSEHDTVQVRKNNLTTRVLARPPPMSSSATSSESSSTSQSPVPFSGSFLEEGGYYRKPSYMSLTQSIKAKQRRSGSSSSCSKTPFEKKQSMSYNGDVNVRRSAGSDPLNNQWTDLYPPAQVTGRHMWAKSQRG.

Residues 14–21 carry the Nuclear localization signal 1 motif; it reads NKKNITDD. The tract at residues 40 to 61 is disordered; the sequence is LISSSKGFKSRGGSYGTPSLGS. IQ domains are found at residues 92–120, 121–143, and 144–169; these read REWAATRIQAAFRAFLARQALRALKAVVR, IQAIFRGRQVRKQADVTLRCMQA, and LVRVQARVRAHCNRGPSDGQELEKPS. A calmodulin-binding region spans residues 119 to 132; the sequence is VRIQAIFRGRQVRK. Disordered regions lie at residues 156–190, 218–244, and 262–329; these read NRGPSDGQELEKPSDQQKDDPAKQAEKGWCDSPGS, HQPRTCPSPAKASKQGSVKKNNGSCKS, and GRLM…SGSF. Positions 164 to 184 are enriched in basic and acidic residues; that stretch reads ELEKPSDQQKDDPAKQAEKGW. The segment covering 231–244 has biased composition (polar residues); sequence KQGSVKKNNGSCKS. Residues 274–289 show a composition bias toward basic and acidic residues; it reads NARKSESSVSEHDTVQ. A compositionally biased stretch (low complexity) spans 307–328; that stretch reads SSSATSSESSSTSQSPVPFSGS. The Nuclear localization signal 2 motif lies at 336 to 343; sequence YRKPSYMS. The interval 347–398 is disordered; the sequence is SIKAKQRRSGSSSSCSKTPFEKKQSMSYNGDVNVRRSAGSDPLNNQWTDLYP.

The protein belongs to the IQD family. In terms of assembly, binds to multiple calmodulin (CaM) in the presence of Ca(2+) and CaM-like proteins.

The protein resides in the nucleus. It is found in the cytoplasm. The protein localises to the cytoskeleton. It localises to the nucleus envelope. Its function is as follows. May be involved in cooperative interactions with calmodulins or calmodulin-like proteins. Recruits calmodulin proteins to microtubules, thus being a potential scaffold in cellular signaling and trafficking. May associate with nucleic acids and regulate gene expression at the transcriptional or post-transcriptional level. In Arabidopsis thaliana (Mouse-ear cress), this protein is Protein IQ-DOMAIN 8.